The chain runs to 950 residues: Leucine--tRNA ligase 2 (950 aa).

The 'HIGH' region motif lies at 47-57 (PYPNSPFHLGH). The 'KMSKS' region motif lies at 631–635 (KMSKS). Lysine 634 is a binding site for ATP.

The protein belongs to the class-I aminoacyl-tRNA synthetase family.

It is found in the cytoplasm. The enzyme catalyses tRNA(Leu) + L-leucine + ATP = L-leucyl-tRNA(Leu) + AMP + diphosphate. This is Leucine--tRNA ligase 2 from Metallosphaera sedula (strain ATCC 51363 / DSM 5348 / JCM 9185 / NBRC 15509 / TH2).